A 259-amino-acid polypeptide reads, in one-letter code: Deoxyribose-phosphate aldolase (259 aa).

D102 acts as the Proton donor/acceptor in catalysis. Residue K167 is the Schiff-base intermediate with acetaldehyde of the active site. The active-site Proton donor/acceptor is K201.

It belongs to the DeoC/FbaB aldolase family. DeoC type 2 subfamily.

Its subcellular location is the cytoplasm. It catalyses the reaction 2-deoxy-D-ribose 5-phosphate = D-glyceraldehyde 3-phosphate + acetaldehyde. Its pathway is carbohydrate degradation; 2-deoxy-D-ribose 1-phosphate degradation; D-glyceraldehyde 3-phosphate and acetaldehyde from 2-deoxy-alpha-D-ribose 1-phosphate: step 2/2. Its function is as follows. Catalyzes a reversible aldol reaction between acetaldehyde and D-glyceraldehyde 3-phosphate to generate 2-deoxy-D-ribose 5-phosphate. This Shigella boydii serotype 4 (strain Sb227) protein is Deoxyribose-phosphate aldolase.